A 220-amino-acid polypeptide reads, in one-letter code: Protein US2 homolog (220 aa).

The protein belongs to the herpesviridae US2 family.

In Bovine herpesvirus 1.2 (strain ST) (BoHV-1), this protein is Protein US2 homolog.